Reading from the N-terminus, the 455-residue chain is Bleomycin hydrolase (455 aa).

Residues C73, H372, and N396 contribute to the active site.

It belongs to the peptidase C1 family. As to quaternary structure, homooctamer.

Its subcellular location is the cytoplasm. The catalysed reaction is Inactivates bleomycin B2 (a cytotoxic glycometallopeptide) by hydrolysis of a carboxyamide bond of beta-aminoalanine, but also shows general aminopeptidase activity. The specificity varies somewhat with source, but amino acid arylamides of Met, Leu and Ala are preferred.. In terms of biological role, the normal physiological role of BLM hydrolase is unknown, but it catalyzes the inactivation of the antitumor drug BLM (a glycopeptide) by hydrolyzing the carboxamide bond of its B-aminoalaninamide moiety thus protecting normal and malignant cells from BLM toxicity. This is Bleomycin hydrolase (BLMH) from Gallus gallus (Chicken).